The sequence spans 509 residues: Lysophospholipid acyltransferase (509 aa).

Topologically, residues Met1–Ser14 are lumenal. The helical transmembrane segment at Phe15–Phe35 threads the bilayer. Topologically, residues Ala36–Ser55 are cytoplasmic. Residues Ile56–Phe76 traverse the membrane as a helical segment. At Asp77–Pro94 the chain is on the lumenal side. A helical transmembrane segment spans residues Trp95–Tyr115. At Pro116 to Arg223 the chain is on the cytoplasmic side. A helical membrane pass occupies residues Gly224–Leu244. The Lumenal segment spans residues Thr245–Pro246. Residues Lys247–Ala267 traverse the membrane as a helical segment. At Arg268–Asp410 the chain is on the cytoplasmic side. Residue His363 is part of the active site. A helical membrane pass occupies residues Val411–Leu431. Over Asn432 to Lys441 the chain is Lumenal. A helical membrane pass occupies residues Glu442–Ile462. Residues Arg463–Glu509 are Cytoplasmic-facing. Residues Ser488–Glu509 form a disordered region. Residue Ser490 is modified to Phosphoserine. Residues Pro500–Glu509 are compositionally biased toward basic and acidic residues.

Belongs to the membrane-bound acyltransferase family.

It localises to the endoplasmic reticulum membrane. Its subcellular location is the microsome membrane. It carries out the reaction a 1-acyl-sn-glycero-3-phosphate + an acyl-CoA = a 1,2-diacyl-sn-glycero-3-phosphate + CoA. The enzyme catalyses a 1-acyl-sn-glycero-3-phosphocholine + an acyl-CoA = a 1,2-diacyl-sn-glycero-3-phosphocholine + CoA. It catalyses the reaction a 1-acyl-sn-glycero-3-phosphoethanolamine + an acyl-CoA = a 1,2-diacyl-sn-glycero-3-phosphoethanolamine + CoA. Its function is as follows. Membrane-bound O-acyltransferase that mediates the incorporation of unsaturated acyl chains into the sn-2 position of phospholipids. This Schizosaccharomyces pombe (strain 972 / ATCC 24843) (Fission yeast) protein is Lysophospholipid acyltransferase (ale1).